Here is a 439-residue protein sequence, read N- to C-terminus: Adenylosuccinate synthetase (439 aa).

Residues 14–20 (GDEGKGK) and 42–44 (GHT) contribute to the GTP site. Asp15 (proton acceptor) is an active-site residue. Residues Asp15 and Gly42 each coordinate Mg(2+). Residues 15 to 18 (DEGK), 40 to 43 (NAGH), Thr130, Arg144, Gln225, Thr240, and Arg304 contribute to the IMP site. The Proton donor role is filled by His43. Residue 300–306 (TTTGRRR) coordinates substrate. GTP-binding positions include Arg306, 332–334 (KLD), and 414–416 (SLG).

Belongs to the adenylosuccinate synthetase family. Homodimer. It depends on Mg(2+) as a cofactor.

It is found in the cytoplasm. It catalyses the reaction IMP + L-aspartate + GTP = N(6)-(1,2-dicarboxyethyl)-AMP + GDP + phosphate + 2 H(+). It participates in purine metabolism; AMP biosynthesis via de novo pathway; AMP from IMP: step 1/2. In terms of biological role, plays an important role in the de novo pathway of purine nucleotide biosynthesis. Catalyzes the first committed step in the biosynthesis of AMP from IMP. In Synechococcus sp. (strain CC9902), this protein is Adenylosuccinate synthetase.